A 161-amino-acid chain; its full sequence is MDQEAVGNIVLLAIVTLISVVQNGFFAHKVEHESKTHNGRSFQRTGTLAFERVYTANQNCVDAYPTFLVMLWSAGLLCSQVPAAFAGLMYLFVRQKYFVGYLGERTQSTPGYIFGKRIILFLFAMSLAGILNYFFIALFGSDFENYIKTVTTTISPLLLIP.

Residues 1-8 lie on the Lumenal side of the membrane; the sequence is MDQEAVGN. A helical transmembrane segment spans residues 9–30; sequence IVLLAIVTLISVVQNGFFAHKV. Residues 31-52 lie on the Cytoplasmic side of the membrane; the sequence is EHESKTHNGRSFQRTGTLAFER. Residues 53-77 traverse the membrane as a helical segment; it reads VYTANQNCVDAYPTFLVMLWSAGLL. Topologically, residues 78 to 80 are lumenal; sequence CSQ. The chain crosses the membrane as a helical span at residues 81–102; it reads VPAAFAGLMYLFVRQKYFVGYL. At 103-107 the chain is on the cytoplasmic side; it reads GERTQ. An intramembrane segment occupies 108–115; it reads STPGYIFG. Residues 116–128 form a helical membrane-spanning segment; it reads KRIILFLFAMSLA. The Lumenal segment spans residues 129–161; that stretch reads GILNYFFIALFGSDFENYIKTVTTTISPLLLIP.

The protein belongs to the MAPEG family. As to quaternary structure, homotrimer. Interacts with LTC4S and ALOX5.

It localises to the nucleus membrane. Its subcellular location is the endoplasmic reticulum membrane. In terms of biological role, required for leukotriene biosynthesis by ALOX5 (5-lipoxygenase). Anchors ALOX5 to the membrane. Binds arachidonic acid, and could play an essential role in the transfer of arachidonic acid to ALOX5. Binds to MK-886, a compound that blocks the biosynthesis of leukotrienes. This Bos taurus (Bovine) protein is Arachidonate 5-lipoxygenase-activating protein (ALOX5AP).